Consider the following 527-residue polypeptide: N-acetylglutamate synthase, mitochondrial (527 aa).

The N-terminal 39 residues, 1-39 (MAKVNSGSSGCRAMVMAGQFWTKPFALSSQRSGPHRRSA), are a transit peptide targeting the mitochondrion. The tract at residues 28–65 (SSQRSGPHRRSAAEVNRRMSSSRTAGHGSKTPLWSQQE) is disordered. Positions 40-83 (AEVNRRMSSSRTAGHGSKTPLWSQQESYNHSSLGERSAWSNRTL) are may stabilize the oligomeric structure. Residues 40-361 (AEVNRRMSSS…SGTLFKNGDP (322 aa)) form an amino-acid kinase domain (AAK) region. An N-acetyltransferase domain is found at 360-511 (DPIRRYSSLE…FAKSHPDSFC (152 aa)). Substrate contacts are provided by residues K386, K429, and 459 to 464 (RSRTTN).

This sequence belongs to the acetyltransferase family. In terms of assembly, homodimer. Homotetramer.

It is found in the mitochondrion matrix. The catalysed reaction is L-glutamate + acetyl-CoA = N-acetyl-L-glutamate + CoA + H(+). Inhibited by L-arginine. In terms of biological role, plays a role in the regulation of ureagenesis by producing the essential cofactor N-acetylglutamate (NAG), thus modulating carbamoylphosphate synthase I (cps1) activity. This is N-acetylglutamate synthase, mitochondrial from Danio rerio (Zebrafish).